A 157-amino-acid polypeptide reads, in one-letter code: Putative pre-16S rRNA nuclease (157 aa).

It belongs to the YqgF nuclease family.

The protein resides in the cytoplasm. Functionally, could be a nuclease involved in processing of the 5'-end of pre-16S rRNA. This is Putative pre-16S rRNA nuclease from Ruegeria sp. (strain TM1040) (Silicibacter sp.).